The following is a 197-amino-acid chain: Probable GTP-binding protein EngB (197 aa).

In terms of domain architecture, EngB-type G spans 22-195 (QLPELALAGR…WRTILNHLKV (174 aa)). GTP is bound by residues 30–37 (GRSNVGKS), 57–61 (GKTQT), 75–78 (DVPG), 142–145 (TKAD), and 174–176 (FSS). Mg(2+) contacts are provided by S37 and T59.

The protein belongs to the TRAFAC class TrmE-Era-EngA-EngB-Septin-like GTPase superfamily. EngB GTPase family. Mg(2+) serves as cofactor.

Functionally, necessary for normal cell division and for the maintenance of normal septation. The protein is Probable GTP-binding protein EngB of Shouchella clausii (strain KSM-K16) (Alkalihalobacillus clausii).